Here is an 84-residue protein sequence, read N- to C-terminus: Large ribosomal subunit protein bL27 (84 aa).

The disordered stretch occupies residues 1–21 (MAHKKGAGSTKNGRDSKPKML).

This sequence belongs to the bacterial ribosomal protein bL27 family.

The sequence is that of Large ribosomal subunit protein bL27 from Dehalococcoides mccartyi (strain ATCC BAA-2100 / JCM 16839 / KCTC 5957 / BAV1).